The chain runs to 159 residues: Cyclic pyranopterin monophosphate synthase (159 aa).

Substrate contacts are provided by residues 75-77 (MCH) and 113-114 (ME). D128 is an active-site residue.

It belongs to the MoaC family. As to quaternary structure, homohexamer; trimer of dimers.

The catalysed reaction is (8S)-3',8-cyclo-7,8-dihydroguanosine 5'-triphosphate = cyclic pyranopterin phosphate + diphosphate. It functions in the pathway cofactor biosynthesis; molybdopterin biosynthesis. Functionally, catalyzes the conversion of (8S)-3',8-cyclo-7,8-dihydroguanosine 5'-triphosphate to cyclic pyranopterin monophosphate (cPMP). The sequence is that of Cyclic pyranopterin monophosphate synthase from Desulfatibacillum aliphaticivorans.